A 198-amino-acid polypeptide reads, in one-letter code: Ribonuclease HII (198 aa).

The region spanning Val-2 to Asn-191 is the RNase H type-2 domain. 3 residues coordinate a divalent metal cation: Asp-8, Glu-9, and Asp-100.

It belongs to the RNase HII family. Mn(2+) is required as a cofactor. The cofactor is Mg(2+).

The protein localises to the cytoplasm. It catalyses the reaction Endonucleolytic cleavage to 5'-phosphomonoester.. Endonuclease that specifically degrades the RNA of RNA-DNA hybrids. The chain is Ribonuclease HII from Desulforamulus reducens (strain ATCC BAA-1160 / DSM 100696 / MI-1) (Desulfotomaculum reducens).